Reading from the N-terminus, the 447-residue chain is N-succinylarginine dihydrolase (447 aa).

Substrate is bound by residues Ala19–Ser28, Asn110, and His137–Arg138. Glu174 is an active-site residue. Arg212 is a substrate binding site. Residue His248 is part of the active site. Substrate-binding residues include Asp250 and Asn359. Cys365 functions as the Nucleophile in the catalytic mechanism.

The protein belongs to the succinylarginine dihydrolase family. In terms of assembly, homodimer.

The enzyme catalyses N(2)-succinyl-L-arginine + 2 H2O + 2 H(+) = N(2)-succinyl-L-ornithine + 2 NH4(+) + CO2. Its pathway is amino-acid degradation; L-arginine degradation via AST pathway; L-glutamate and succinate from L-arginine: step 2/5. Catalyzes the hydrolysis of N(2)-succinylarginine into N(2)-succinylornithine, ammonia and CO(2). The sequence is that of N-succinylarginine dihydrolase from Escherichia fergusonii (strain ATCC 35469 / DSM 13698 / CCUG 18766 / IAM 14443 / JCM 21226 / LMG 7866 / NBRC 102419 / NCTC 12128 / CDC 0568-73).